Reading from the N-terminus, the 155-residue chain is NADPH-dependent 7-cyano-7-deazaguanine reductase (155 aa).

The Thioimide intermediate role is filled by Cys-53. Residue Asp-60 is the Proton donor of the active site. Substrate is bound by residues 75 to 77 and 94 to 95; these read VES and HE.

It belongs to the GTP cyclohydrolase I family. QueF type 1 subfamily.

It localises to the cytoplasm. It carries out the reaction 7-aminomethyl-7-carbaguanine + 2 NADP(+) = 7-cyano-7-deazaguanine + 2 NADPH + 3 H(+). Its pathway is tRNA modification; tRNA-queuosine biosynthesis. Functionally, catalyzes the NADPH-dependent reduction of 7-cyano-7-deazaguanine (preQ0) to 7-aminomethyl-7-deazaguanine (preQ1). In Hyphomonas neptunium (strain ATCC 15444), this protein is NADPH-dependent 7-cyano-7-deazaguanine reductase.